Reading from the N-terminus, the 527-residue chain is Inosine-5'-monophosphate dehydrogenase (527 aa).

2 CBS domains span residues 121-183 (FILD…VTAV) and 184-240 (MSTD…PLAS). Residues 277–279 (DSS) and 327–329 (GMG) contribute to the NAD(+) site. The K(+) site is built by glycine 329 and glycine 331. Serine 332 is a binding site for IMP. Residue cysteine 334 coordinates K(+). Cysteine 334 functions as the Thioimidate intermediate in the catalytic mechanism. IMP contacts are provided by residues 367–369 (DGG) and 390–391 (GS). Arginine 440 acts as the Proton acceptor in catalysis. Residue glutamine 452 participates in IMP binding. The tract at residues 506–527 (ASAQTEGNVHGLHSHEKKLYSS) is disordered. Positions 511 and 512 each coordinate K(+). Basic and acidic residues predominate over residues 518–527 (HSHEKKLYSS).

Belongs to the IMPDH/GMPR family. Homotetramer. K(+) is required as a cofactor.

It localises to the cytoplasm. The enzyme catalyses IMP + NAD(+) + H2O = XMP + NADH + H(+). The protein operates within purine metabolism; XMP biosynthesis via de novo pathway; XMP from IMP: step 1/1. Mycophenolic acid (MPA) is a non-competitive inhibitor that prevents formation of the closed enzyme conformation by binding to the same site as the amobile flap. In contrast, mizoribine monophosphate (MZP) is a competitive inhibitor that induces the closed conformation. MPA is a potent inhibitor of mammalian IMPDHs but a poor inhibitor of the bacterial enzymes. MZP is a more potent inhibitor of bacterial IMPDH. In terms of biological role, catalyzes the conversion of inosine 5'-phosphate (IMP) to xanthosine 5'-phosphate (XMP), the first committed and rate-limiting step in the de novo synthesis of guanine nucleotides, and therefore plays an important role in the regulation of cell growth. Part of the gene cluster that mediates the biosynthesis of mycophenolic acid (MPA), the first isolated antibiotic natural product in the world. Does not play a role in the biosynthesis of MPA, but is involved in self resistance to MPA, since MPA acts as an inhibitor of IMP dehydrogenases. The sequence is that of Inosine-5'-monophosphate dehydrogenase from Penicillium brevicompactum.